Here is a 445-residue protein sequence, read N- to C-terminus: Trigger factor (445 aa).

The PPIase FKBP-type domain occupies 172–257 (GDQVVIDFVG…VKSVNWAHMP (86 aa)).

The protein belongs to the FKBP-type PPIase family. Tig subfamily.

Its subcellular location is the cytoplasm. The catalysed reaction is [protein]-peptidylproline (omega=180) = [protein]-peptidylproline (omega=0). In terms of biological role, involved in protein export. Acts as a chaperone by maintaining the newly synthesized protein in an open conformation. Functions as a peptidyl-prolyl cis-trans isomerase. The protein is Trigger factor of Polynucleobacter asymbioticus (strain DSM 18221 / CIP 109841 / QLW-P1DMWA-1) (Polynucleobacter necessarius subsp. asymbioticus).